The chain runs to 320 residues: Acyl-coenzyme A thioesterase 8 (320 aa).

Residues Asp-233, Ser-255, and Gln-305 each act as charge relay system in the active site. A Microbody targeting signal motif is present at residues 318-320 (SKL).

It belongs to the C/M/P thioester hydrolase family. Homodimer. In terms of tissue distribution, ubiquitous.

It localises to the peroxisome matrix. It carries out the reaction choloyl-CoA + H2O = cholate + CoA + H(+). It catalyses the reaction chenodeoxycholoyl-CoA + H2O = chenodeoxycholate + CoA + H(+). The enzyme catalyses acetyl-CoA + H2O = acetate + CoA + H(+). The catalysed reaction is malonyl-CoA + H2O = malonate + CoA + H(+). It carries out the reaction acetoacetyl-CoA + H2O = acetoacetate + CoA + H(+). It catalyses the reaction propanoyl-CoA + H2O = propanoate + CoA + H(+). The enzyme catalyses butanoyl-CoA + H2O = butanoate + CoA + H(+). The catalysed reaction is succinyl-CoA + H2O = succinate + CoA + H(+). It carries out the reaction glutaryl-CoA + H2O = glutarate + CoA + H(+). It catalyses the reaction hexanoyl-CoA + H2O = hexanoate + CoA + H(+). The enzyme catalyses hexanedioyl-CoA + H2O = hexanedioate + CoA + H(+). The catalysed reaction is octanoyl-CoA + H2O = octanoate + CoA + H(+). It carries out the reaction octanedioyl-CoA + H2O = octanedioate + CoA + H(+). It catalyses the reaction decanoyl-CoA + H2O = decanoate + CoA + H(+). The enzyme catalyses decanedioyl-CoA + H2O = decanedioate + CoA + H(+). The catalysed reaction is dodecanoyl-CoA + H2O = dodecanoate + CoA + H(+). It carries out the reaction dodecanedioyl-CoA + H2O = dodecanedioate + CoA + H(+). It catalyses the reaction tetradecanoyl-CoA + H2O = tetradecanoate + CoA + H(+). The enzyme catalyses (9Z)-tetradecenoyl-CoA + H2O = (9Z)-tetradecenoate + CoA + H(+). The catalysed reaction is hexadecanoyl-CoA + H2O = hexadecanoate + CoA + H(+). It carries out the reaction (9Z)-hexadecenoyl-CoA + H2O = (9Z)-hexadecenoate + CoA + H(+). It catalyses the reaction octadecanoyl-CoA + H2O = octadecanoate + CoA + H(+). The enzyme catalyses (9Z)-octadecenoyl-CoA + H2O = (9Z)-octadecenoate + CoA + H(+). The catalysed reaction is (9Z,12Z)-octadecadienoyl-CoA + H2O = (9Z,12Z)-octadecadienoate + CoA + H(+). It carries out the reaction eicosanoyl-CoA + H2O = eicosanoate + CoA + H(+). It catalyses the reaction (5Z,8Z,11Z,14Z)-eicosatetraenoyl-CoA + H2O = (5Z,8Z,11Z,14Z)-eicosatetraenoate + CoA + H(+). The enzyme catalyses 4,8-dimethylnonanoyl-CoA + H2O = 4,8-dimethylnonanoate + CoA + H(+). The catalysed reaction is 2,6-dimethylheptanoyl-CoA + H2O = 2,6-dimethylheptanoate + CoA + H(+). It carries out the reaction (3S)-3-hydroxy-3-methylglutaryl-CoA + H2O = 3-hydroxy-3-methylglutarate + CoA + H(+). It catalyses the reaction 3alpha,7alpha,12alpha-trihydroxy-5beta-cholestan-26-oyl-CoA + H2O = 3alpha,7alpha,12alpha-trihydroxy-5beta-cholestan-26-oate + CoA + H(+). The enzyme catalyses 2-methyloctadecanoyl-CoA + H2O = 2-methyloctadecanoate + CoA + H(+). The catalysed reaction is prostaglandin F2alpha-CoA + H2O = prostaglandin F2alpha + CoA + H(+). It functions in the pathway lipid metabolism; fatty acid metabolism. With respect to regulation, inhibited by CoASH (IC(50)=10-15 uM). Also inhibited by cysteine-reactive agents. Functionally, catalyzes the hydrolysis of acyl-CoAs into free fatty acids and coenzyme A (CoASH), regulating their respective intracellular levels. Displays no strong substrate specificity with respect to the carboxylic acid moiety of Acyl-CoAs. Hydrolyzes medium length (C2 to C20) straight-chain, saturated and unsaturated acyl-CoAS but is inactive towards substrates with longer aliphatic chains. Moreover, it catalyzes the hydrolysis of CoA esters of bile acids, such as choloyl-CoA and chenodeoxycholoyl-CoA and competes with bile acid CoA:amino acid N-acyltransferase (BAAT). Is also able to hydrolyze CoA esters of dicarboxylic acids. It is involved in the metabolic regulation of peroxisome proliferation. The chain is Acyl-coenzyme A thioesterase 8 (Acot8) from Mus musculus (Mouse).